The sequence spans 425 residues: MDTIAIPALNRPVDATVEIPGSKSITNRALLVAALAQGDSTLENALFSEDSEYFAKCVEQLGIPITLHPHLAQIQVSGKGGDIPAKQADLFVGLAGTAARFITALVALGNGEYRLDGVPRMRERPMGDLVTVLQNSGITINFEGNSGFMPYTIYGQQFAGGHFRLKANQTSQQLSALLMIAPYAQQDTTIEVEGTLVSQSYVKMTCRLMADFGVDVTQTDDNQFHIKAGQRYQARHYTIEPDASNASYFFAAAAVTGGRVRVNHLTKQSCQGDILWLNVLEQMGCQVIEGADYTEVIGPEQLQGIDIDMNDMSDLVQTLGAIAPYASSPVIIRNVEHIRYKETERIRAVVTELRRLGVKVEEFADGMKIEPTPITPAAIETYHDHRMAMAFAVTGLKTPGIVIQDPGCTAKTFPDYFTRFFKMID.

3-phosphoshikimate-binding residues include lysine 23, serine 24, and arginine 28. Lysine 23 lines the phosphoenolpyruvate pocket. Phosphoenolpyruvate is bound by residues glycine 96 and arginine 124. 6 residues coordinate 3-phosphoshikimate: threonine 170, serine 171, glutamine 172, serine 198, aspartate 314, and lysine 341. Position 172 (glutamine 172) interacts with phosphoenolpyruvate. The Proton acceptor role is filled by aspartate 314. Phosphoenolpyruvate is bound by residues arginine 345, arginine 386, and lysine 411.

Belongs to the EPSP synthase family. As to quaternary structure, monomer.

It is found in the cytoplasm. The enzyme catalyses 3-phosphoshikimate + phosphoenolpyruvate = 5-O-(1-carboxyvinyl)-3-phosphoshikimate + phosphate. It functions in the pathway metabolic intermediate biosynthesis; chorismate biosynthesis; chorismate from D-erythrose 4-phosphate and phosphoenolpyruvate: step 6/7. Catalyzes the transfer of the enolpyruvyl moiety of phosphoenolpyruvate (PEP) to the 5-hydroxyl of shikimate-3-phosphate (S3P) to produce enolpyruvyl shikimate-3-phosphate and inorganic phosphate. The polypeptide is 3-phosphoshikimate 1-carboxyvinyltransferase (Nostoc sp. (strain PCC 7120 / SAG 25.82 / UTEX 2576)).